The sequence spans 214 residues: Orotate phosphoribosyltransferase (214 aa).

5-phospho-alpha-D-ribose 1-diphosphate is bound at residue lysine 26. 34-35 (FF) contacts orotate. Residues 72-73 (YK), arginine 98, lysine 99, lysine 102, histidine 104, and 123-131 (DDVISAGTS) each bind 5-phospho-alpha-D-ribose 1-diphosphate. Residues serine 127 and arginine 155 each coordinate orotate.

Belongs to the purine/pyrimidine phosphoribosyltransferase family. PyrE subfamily. As to quaternary structure, homodimer. Mg(2+) is required as a cofactor.

It catalyses the reaction orotidine 5'-phosphate + diphosphate = orotate + 5-phospho-alpha-D-ribose 1-diphosphate. It participates in pyrimidine metabolism; UMP biosynthesis via de novo pathway; UMP from orotate: step 1/2. Functionally, catalyzes the transfer of a ribosyl phosphate group from 5-phosphoribose 1-diphosphate to orotate, leading to the formation of orotidine monophosphate (OMP). The protein is Orotate phosphoribosyltransferase of Chromobacterium violaceum (strain ATCC 12472 / DSM 30191 / JCM 1249 / CCUG 213 / NBRC 12614 / NCIMB 9131 / NCTC 9757 / MK).